A 165-amino-acid polypeptide reads, in one-letter code: Ubiquitin D (165 aa).

2 Ubiquitin-like domains span residues 6–81 and 90–163; these read SCLC…LKVV and LFLV…CYCI.

This sequence belongs to the ubiquitin D family. In terms of assembly, interacts directly with the 26S proteasome. Interacts with NUB1; this interaction facilitates the linking of UBD-conjugated target protein to the proteasome complex and accelerates its own degradation and that of its conjugates. Interacts (via ubiquitin-like 1 domain) with the spindle checkpoint protein MAD2L1 during mitosis. Present in aggresomes of proteasome inhibited cells. Interacts with HDAC6 under proteasome impairment conditions. Forms a thioester with UBA6 in cells stimulated with tumor necrosis factor-alpha (TNFa) and interferon-gamma (IFNg). Interacts with SQSTM1 and TP53/p53. Post-translationally, can be acetylated. Constitutively expressed in mature dendritic cells and B-cells. Mostly expressed in the reticuloendothelial system (e.g. thymus, spleen), the gastrointestinal system, kidney, lung and prostate gland.

The protein resides in the nucleus. It localises to the cytoplasm. Functionally, ubiquitin-like protein modifier which can be covalently attached to target proteins and subsequently leads to their degradation by the 26S proteasome, in a NUB1-dependent manner. Conjugation to the target protein is activated by UBA6 via adenylation of its C-terminal glycine. Promotes the expression of the proteasome subunit beta type-9 (PSMB9/LMP2). Regulates TNF-alpha-induced and LPS-mediated activation of the central mediator of innate immunity NF-kappa-B by promoting TNF-alpha-mediated proteasomal degradation of ubiquitinated-I-kappa-B-alpha. Required for TNF-alpha-induced p65 nuclear translocation in renal tubular epithelial cells (RTECs). May be involved in dendritic cell (DC) maturation, the process by which immature dendritic cells differentiate into fully competent antigen-presenting cells that initiate T-cell responses. Mediates mitotic non-disjunction and chromosome instability, in long-term in vitro culture and cancers, by abbreviating mitotic phase and impairing the kinetochore localization of MAD2L1 during the prometaphase stage of the cell cycle. May be involved in the formation of aggresomes when proteasome is saturated or impaired. Mediates apoptosis in a caspase-dependent manner, especially in renal epithelium and tubular cells during renal diseases such as polycystic kidney disease and Human immunodeficiency virus (HIV)-associated nephropathy (HIVAN). The sequence is that of Ubiquitin D (UBD) from Homo sapiens (Human).